The chain runs to 389 residues: S-adenosylmethionine synthase (389 aa).

His18 contributes to the ATP binding site. Asp20 contacts Mg(2+). Glu46 contributes to the K(+) binding site. Glu59 and Gln103 together coordinate L-methionine. The segment at 103–113 is flexible loop; that stretch reads QSADIAMGVDS. ATP-binding positions include 168–170, Asp244, 250–251, Ala267, and Lys271; these read DSK and RK. Position 244 (Asp244) interacts with L-methionine. Lys275 serves as a coordination point for L-methionine.

This sequence belongs to the AdoMet synthase family. In terms of assembly, homotetramer; dimer of dimers. Mg(2+) is required as a cofactor. K(+) serves as cofactor.

Its subcellular location is the cytoplasm. The catalysed reaction is L-methionine + ATP + H2O = S-adenosyl-L-methionine + phosphate + diphosphate. It functions in the pathway amino-acid biosynthesis; S-adenosyl-L-methionine biosynthesis; S-adenosyl-L-methionine from L-methionine: step 1/1. Catalyzes the formation of S-adenosylmethionine (AdoMet) from methionine and ATP. The overall synthetic reaction is composed of two sequential steps, AdoMet formation and the subsequent tripolyphosphate hydrolysis which occurs prior to release of AdoMet from the enzyme. The protein is S-adenosylmethionine synthase of Pelagibacter ubique (strain HTCC1062).